Reading from the N-terminus, the 105-residue chain is Large ribosomal subunit protein uL24 (105 aa).

It belongs to the universal ribosomal protein uL24 family. As to quaternary structure, part of the 50S ribosomal subunit.

One of two assembly initiator proteins, it binds directly to the 5'-end of the 23S rRNA, where it nucleates assembly of the 50S subunit. Functionally, one of the proteins that surrounds the polypeptide exit tunnel on the outside of the subunit. This Staphylococcus haemolyticus (strain JCSC1435) protein is Large ribosomal subunit protein uL24.